Consider the following 611-residue polypeptide: Endo-1,4-beta-xylanase A (611 aa).

Positions 1–26 (MRTAMAKSLGAAAFLGAALFAHTLAA) are cleaved as a signal peptide. The CBM2 domain occupies 27–128 (QTATCSYNIT…SVGGSICSGS (102 aa)). Disulfide bonds link C31/C125, C184/C215, and C194/C209. Positions 183-212 (QCNWYGTLYPLCVTTTNGWGWEDQRSCIAR) constitute a CBM10 domain. The 327-residue stretch at 281-607 (SGGNADIFTS…KPAYQGVVEA (327 aa)) folds into the GH10 domain. Residue E391 is the Proton donor of the active site. E510 (nucleophile) is an active-site residue.

Belongs to the glycosyl hydrolase 10 (cellulase F) family.

It carries out the reaction Endohydrolysis of (1-&gt;4)-beta-D-xylosidic linkages in xylans.. It functions in the pathway glycan degradation; xylan degradation. This Cellvibrio japonicus (strain Ueda107) (Pseudomonas fluorescens subsp. cellulosa) protein is Endo-1,4-beta-xylanase A (xynA).